Here is a 295-residue protein sequence, read N- to C-terminus: Small ribosomal subunit protein uS2 (295 aa).

Serine 2 bears the N-acetylserine mark. At serine 43 the chain carries Phosphoserine. Lysine 52 bears the N6-acetyllysine mark. The interaction with PPP1R16B stretch occupies residues 54 to 113 (TWEKLLLAARAIVAIENPADVSVISSRNTGQRAVLKFAAATGATPIAGRFTPGTFTNQIQ). Lysine 89 bears the N6-acetyllysine; alternate mark. Residue lysine 89 forms a Glycyl lysine isopeptide (Lys-Gly) (interchain with G-Cter in SUMO2); alternate linkage. Threonine 97 is subject to Phosphothreonine. Laminin-binding stretches follow at residues 161 to 180 (IPCN…MLAR) and 205 to 229 (RDPE…EFQG). Residues 214–227 (EQAAAEKAVTKEEF) are compositionally biased toward basic and acidic residues. The disordered stretch occupies residues 214–240 (EQAAAEKAVTKEEFQGEWTAPAPEFTA). [DE]-W-[ST] repeat units follow at residues 230–232 (EWT), 247–249 (DWS), 266–268 (DWS), and 275–277 (DWS). Residues 242–295 (QPEVADWSEGVQVPSVPIQQFPTEDWSARPFTEDWSAAPTAQATEWVGTTSELS) form a laminin-binding region. Residues 263-295 (PTEDWSARPFTEDWSAAPTAQATEWVGTTSELS) are disordered. A compositionally biased stretch (polar residues) spans 280–295 (PTAQATEWVGTTSELS).

Belongs to the universal ribosomal protein uS2 family. In terms of assembly, monomer (37LRP) and homodimer (67LR). Component of the small ribosomal subunit. Mature ribosomes consist of a small (40S) and a large (60S) subunit. The 40S subunit contains about 33 different proteins and 1 molecule of RNA (18S). The 60S subunit contains about 49 different proteins and 3 molecules of RNA (28S, 5.8S and 5S). Interacts with RPS21. Interacts with several laminins including at least LAMB1. Interacts with MDK. The mature dimeric form interacts with PPP1R16B (via its fourth ankyrin repeat). Interacts with PPP1CA only in the presence of PPP1R16B. Acylated. Acylation may be a prerequisite for conversion of the monomeric 37 kDa laminin receptor precursor (37LRP) to the mature dimeric 67 kDa laminin receptor (67LR), and may provide a mechanism for membrane association. In terms of processing, cleaved by stromelysin-3 (ST3) at the cell surface. Cleavage by stromelysin-3 may be a mechanism to alter cell-extracellular matrix interactions.

It is found in the cell membrane. The protein localises to the cytoplasm. The protein resides in the nucleus. Required for the assembly and/or stability of the 40S ribosomal subunit. Required for the processing of the 20S rRNA-precursor to mature 18S rRNA in a late step of the maturation of 40S ribosomal subunits. Also functions as a cell surface receptor for laminin. Plays a role in cell adhesion to the basement membrane and in the consequent activation of signaling transduction pathways. May play a role in cell fate determination and tissue morphogenesis. Also acts as a receptor for several other ligands, including the pathogenic prion protein, viruses, and bacteria. Acts as a PPP1R16B-dependent substrate of PPP1CA. In Ovis aries (Sheep), this protein is Small ribosomal subunit protein uS2.